Consider the following 61-residue polypeptide: UPF0181 protein MS1074 (61 aa).

The protein belongs to the UPF0181 family.

This chain is UPF0181 protein MS1074, found in Mannheimia succiniciproducens (strain KCTC 0769BP / MBEL55E).